A 591-amino-acid polypeptide reads, in one-letter code: L-fucose isomerase (591 aa).

Catalysis depends on proton acceptor residues glutamate 337 and aspartate 361. Residues glutamate 337, aspartate 361, and histidine 528 each coordinate Mn(2+).

Belongs to the L-fucose isomerase family. Homohexamer. The cofactor is Mn(2+).

The protein localises to the cytoplasm. The catalysed reaction is L-fucose = L-fuculose. It participates in carbohydrate degradation; L-fucose degradation; L-lactaldehyde and glycerone phosphate from L-fucose: step 1/3. Its function is as follows. Converts the aldose L-fucose into the corresponding ketose L-fuculose. The polypeptide is L-fucose isomerase (Salmonella paratyphi B (strain ATCC BAA-1250 / SPB7)).